Here is a 105-residue protein sequence, read N- to C-terminus: Pyrimidine/purine nucleoside phosphorylase (105 aa).

Belongs to the nucleoside phosphorylase PpnP family.

The enzyme catalyses a purine D-ribonucleoside + phosphate = a purine nucleobase + alpha-D-ribose 1-phosphate. It carries out the reaction adenosine + phosphate = alpha-D-ribose 1-phosphate + adenine. The catalysed reaction is cytidine + phosphate = cytosine + alpha-D-ribose 1-phosphate. It catalyses the reaction guanosine + phosphate = alpha-D-ribose 1-phosphate + guanine. The enzyme catalyses inosine + phosphate = alpha-D-ribose 1-phosphate + hypoxanthine. It carries out the reaction thymidine + phosphate = 2-deoxy-alpha-D-ribose 1-phosphate + thymine. The catalysed reaction is uridine + phosphate = alpha-D-ribose 1-phosphate + uracil. It catalyses the reaction xanthosine + phosphate = alpha-D-ribose 1-phosphate + xanthine. Its function is as follows. Catalyzes the phosphorolysis of diverse nucleosides, yielding D-ribose 1-phosphate and the respective free bases. Can use uridine, adenosine, guanosine, cytidine, thymidine, inosine and xanthosine as substrates. Also catalyzes the reverse reactions. The chain is Pyrimidine/purine nucleoside phosphorylase from Delftia acidovorans (strain DSM 14801 / SPH-1).